The following is an 84-amino-acid chain: Small nuclear ribonucleoprotein E (84 aa).

The Sm domain maps to 13–84 (INFIFKLLQQ…GDNITLIQAI (72 aa)).

The protein belongs to the snRNP Sm proteins family. In terms of assembly, component of the Sm core complex, present in spliceosomal snRNP U1, U2, U4/U6 and U5. The core complex contains smb1, smd1, smd2, smd3, sme1, smf1 and smg1 (Sm proteins B, D1, D2, D3, E, F and G, respectively), and is probably a heptameric ring structure.

Its subcellular location is the cytoplasm. It localises to the nucleus. Functionally, involved in pre-mRNA splicing. Binds and is required for the stability of snRNA U1, U2, U4 and U5 which contain a highly conserved structural motif called the Sm binding site. Involved in cap modification. The chain is Small nuclear ribonucleoprotein E from Schizosaccharomyces pombe (strain 972 / ATCC 24843) (Fission yeast).